Reading from the N-terminus, the 87-residue chain is UPF0250 protein SG0794 (87 aa).

Belongs to the UPF0250 family.

This chain is UPF0250 protein SG0794, found in Sodalis glossinidius (strain morsitans).